The following is a 313-amino-acid chain: Phosphoenolpyruvate phosphomutase (313 aa).

Residues 1-23 are disordered; that stretch reads MNATERPGSDGTGSPESVGSRLK. D69 serves as the catalytic Nucleophile.

It belongs to the isocitrate lyase/PEP mutase superfamily. PEP mutase family.

The catalysed reaction is phosphoenolpyruvate + H(+) = 3-phosphonopyruvate. It participates in secondary metabolite biosynthesis; bialaphos biosynthesis. Its function is as follows. Formation of a carbon-phosphorus bond by converting phosphoenolpyruvate (PEP) to phosphonopyruvate (P-Pyr). The sequence is that of Phosphoenolpyruvate phosphomutase (ppm) from Streptomyces viridochromogenes (strain DSM 40736 / JCM 4977 / BCRC 1201 / Tue 494).